A 158-amino-acid polypeptide reads, in one-letter code: U4/U6.U5 small nuclear ribonucleoprotein 27 kDa protein (158 aa).

The disordered stretch occupies residues 1-102; sequence MGRSRSRSPE…AEDLEGKTEE (102 aa). Residues 13–59 are compositionally biased toward basic residues; that stretch reads RERRRSRSASRERERRRRERSRSRERRRSRSRSPHRRRSRSPRRHRS. A compositionally biased stretch (basic and acidic residues) spans 66-101; it reads RLKDRRDDDKKEPKESKGGGSKERQLAAEDLEGKTE.

It belongs to the SNUT3 family. Part of a tri-snRNP complex.

The protein localises to the nucleus. In terms of biological role, may play a role in mRNA splicing. The chain is U4/U6.U5 small nuclear ribonucleoprotein 27 kDa protein (snrnp27) from Xenopus laevis (African clawed frog).